The sequence spans 320 residues: Stress-involved WYL domain-containing regulator (320 aa).

The HTH deoR-type domain occupies 7–65 (TTGRVVQLLGLLQSRRVWTGEELAERLGVTGRSVRRDIERLRELGYPVHASKGQGGGYQ). The segment at residues 24–43 (WTGEELAERLGVTGRSVRRD) is a DNA-binding region (H-T-H motif). Residues 139–218 (DTAVAPDVLM…SDVRATGTTF (80 aa)) form the WYL domain. The interval 245–320 (VRYFAPEKVV…MADRLRRAVR (76 aa)) is WCX domain.

As to quaternary structure, homodimer.

Functionally, transcriptional activator. Acts as a transcriptional activator of the MSMEG_1357-56 operon upon genotoxic stress. Controls adjacent genes that belong to the DinB/YfiT-like putative metalloenzymes superfamily by upregulating their expression in response to various genotoxic stress conditions, including exposure to H(2)O(2) or the natural antibiotic zeocin, as well as mitomycin C (MMC), diamide and UVC radiation. Upon genotoxic stress, upregulates two genes encoding proteins of the DinB/YfiT-like putative metalloenzymes superfamily, MSMEG_1357 and MSMEG_1356. Binds different forms of single-stranded DNA (ssDNA) with high affinity, primarily through its characteristic WYL domain. Binds nucleic acids with single-stranded regions, such as polyT 20mer ssDNA, 5' tailed, 3' tailed and fork DNA, but not ssRNA. The protein is Stress-involved WYL domain-containing regulator of Mycolicibacterium smegmatis (strain ATCC 700084 / mc(2)155) (Mycobacterium smegmatis).